A 160-amino-acid polypeptide reads, in one-letter code: MLNDKIKELITPTAKALGYKVINVNFVVKPAILKIVIDRFDEKKVKVLDCQAFSKAISAVLDVENIIPGKYFLEVESAGIERSLMDLEDFIKFLGYTIQVKLVAAINENKKYIGVISNIKGQEITLNLQNDSTIAIDYDNIKVAKIVFTDEMFRQITKNY.

This sequence belongs to the RimP family.

It localises to the cytoplasm. Its function is as follows. Required for maturation of 30S ribosomal subunits. The sequence is that of Ribosome maturation factor RimP from Orientia tsutsugamushi (strain Ikeda) (Rickettsia tsutsugamushi).